The sequence spans 256 residues: Type III pantothenate kinase (256 aa).

ATP is bound at residue 6-13 (DVGNSHIY). Substrate-binding positions include Y99 and 106–109 (GADR). D108 (proton acceptor) is an active-site residue. D129 provides a ligand contact to K(+). Residue T132 coordinates ATP. Residue T184 participates in substrate binding.

It belongs to the type III pantothenate kinase family. Homodimer. It depends on NH4(+) as a cofactor. K(+) is required as a cofactor.

It localises to the cytoplasm. It catalyses the reaction (R)-pantothenate + ATP = (R)-4'-phosphopantothenate + ADP + H(+). It functions in the pathway cofactor biosynthesis; coenzyme A biosynthesis; CoA from (R)-pantothenate: step 1/5. Catalyzes the phosphorylation of pantothenate (Pan), the first step in CoA biosynthesis. The chain is Type III pantothenate kinase from Legionella pneumophila (strain Paris).